Reading from the N-terminus, the 38-residue chain is Large ribosomal subunit protein bL36 (38 aa).

The protein belongs to the bacterial ribosomal protein bL36 family.

The polypeptide is Large ribosomal subunit protein bL36 (Acholeplasma laidlawii (strain PG-8A)).